Consider the following 293-residue polypeptide: Bifunctional protein FolD (293 aa).

NADP(+)-binding positions include 165-167 (GRS), Ser190, and Ile231.

Belongs to the tetrahydrofolate dehydrogenase/cyclohydrolase family. In terms of assembly, homodimer.

The enzyme catalyses (6R)-5,10-methylene-5,6,7,8-tetrahydrofolate + NADP(+) = (6R)-5,10-methenyltetrahydrofolate + NADPH. It carries out the reaction (6R)-5,10-methenyltetrahydrofolate + H2O = (6R)-10-formyltetrahydrofolate + H(+). It functions in the pathway one-carbon metabolism; tetrahydrofolate interconversion. In terms of biological role, catalyzes the oxidation of 5,10-methylenetetrahydrofolate to 5,10-methenyltetrahydrofolate and then the hydrolysis of 5,10-methenyltetrahydrofolate to 10-formyltetrahydrofolate. This chain is Bifunctional protein FolD, found in Synechococcus sp. (strain CC9311).